The primary structure comprises 222 residues: uncharacterized protein (222 aa).

The next 4 membrane-spanning stretches (helical) occupy residues 23-43 (FFAA…TGLL), 67-87 (IWVL…IGYL), 157-177 (IVGG…LGNV), and 187-207 (IILG…WHGY).

The protein belongs to the DedA family.

The protein resides in the cell membrane. This is an uncharacterized protein from Mycobacterium leprae (strain TN).